Reading from the N-terminus, the 182-residue chain is Shikimate kinase (182 aa).

Residue 14 to 19 participates in ATP binding; sequence GAGKTT. Thr-18 lines the Mg(2+) pocket. Positions 36, 60, and 84 each coordinate substrate. Arg-122 contributes to the ATP binding site. Substrate is bound at residue Arg-141.

It belongs to the shikimate kinase family. As to quaternary structure, monomer. Requires Mg(2+) as cofactor.

Its subcellular location is the cytoplasm. It catalyses the reaction shikimate + ATP = 3-phosphoshikimate + ADP + H(+). It functions in the pathway metabolic intermediate biosynthesis; chorismate biosynthesis; chorismate from D-erythrose 4-phosphate and phosphoenolpyruvate: step 5/7. Functionally, catalyzes the specific phosphorylation of the 3-hydroxyl group of shikimic acid using ATP as a cosubstrate. The sequence is that of Shikimate kinase from Marinomonas sp. (strain MWYL1).